A 1070-amino-acid polypeptide reads, in one-letter code: Granule associated Rac and RHOG effector protein 1 (1070 aa).

3 disordered regions span residues 681 to 771, 855 to 992, and 1032 to 1070; these read EQKA…VGAG, SQAM…STLP, and SYVQTPPQPPPPPAHKAAPKGFKAFPGKGERRPAYLPQY. The span at 692-702 shows a compositional bias: pro residues; the sequence is PSLPVPPPPRA. Composition is skewed to low complexity over residues 719–742, 906–924, and 951–962; these read PQQQSPKQQQPQVQYYQHLLQPIG, AQGDSASSSDETSSANGDS, and TSTLPSPPLLTT. A Phosphoserine modification is found at Ser723. Pro residues predominate over residues 977–992; that stretch reads PKAPWQHPSPLPSTLP. Over residues 1046–1058 the composition is skewed to low complexity; that stretch reads HKAAPKGFKAFPG.

Interacts with AGO2 and TNRC6A.

It is found in the cytoplasm. The protein localises to the P-body. Its function is as follows. Acts as an effector of RAC1. Associates with CCR4-NOT complex which is one of the major cellular mRNA deadenylases and is linked to various cellular processes including bulk mRNA degradation, miRNA-mediated repression, translational repression during translational initiation and general transcription regulation. May also play a role in miRNA silencing machinery. This chain is Granule associated Rac and RHOG effector protein 1, found in Homo sapiens (Human).